The primary structure comprises 158 residues: Ribosome maturation factor RimP (158 aa).

This sequence belongs to the RimP family.

It localises to the cytoplasm. Its function is as follows. Required for maturation of 30S ribosomal subunits. This Lactobacillus acidophilus (strain ATCC 700396 / NCK56 / N2 / NCFM) protein is Ribosome maturation factor RimP.